A 148-amino-acid chain; its full sequence is Calmodulin-4 (148 aa).

EF-hand domains follow at residues 8-43 (EEVAEFQAAFNRFDKNKDGHISVEELGDVMKQLGKN), 44-79 (LPEKDLKALISKLDTDGDGKISFEEFLTAIEKYKKG), 80-115 (HRAGELRAVFNVLDQNGDGYITVDELKESLSKLGES), and 116-148 (LSQEELEDMIRVADVDQDGKVKYEEFVRLHVEN). D21, N23, D25, H27, E32, D57, D59, D61, K63, E68, D93, N95, D97, Y99, and E104 together coordinate Ca(2+).

Implicated in the early stage of ectopic ossification. This is Calmodulin-4 (Calm4) from Mus musculus (Mouse).